The following is a 297-amino-acid chain: Formamidopyrimidine-DNA glycosylase (297 aa).

Residue proline 2 is the Schiff-base intermediate with DNA of the active site. Glutamate 3 serves as the catalytic Proton donor. The Proton donor; for beta-elimination activity role is filled by lysine 61. Residues arginine 120 and arginine 176 each coordinate DNA. The FPG-type zinc-finger motif lies at 262 to 296 (HVYGRQGQPCDRCGTAIVRESFMNRGSHFCPRCQR). Arginine 286 functions as the Proton donor; for delta-elimination activity in the catalytic mechanism.

It belongs to the FPG family. In terms of assembly, monomer. The cofactor is Zn(2+).

It carries out the reaction Hydrolysis of DNA containing ring-opened 7-methylguanine residues, releasing 2,6-diamino-4-hydroxy-5-(N-methyl)formamidopyrimidine.. The enzyme catalyses 2'-deoxyribonucleotide-(2'-deoxyribose 5'-phosphate)-2'-deoxyribonucleotide-DNA = a 3'-end 2'-deoxyribonucleotide-(2,3-dehydro-2,3-deoxyribose 5'-phosphate)-DNA + a 5'-end 5'-phospho-2'-deoxyribonucleoside-DNA + H(+). Its function is as follows. Involved in base excision repair of DNA damaged by oxidation or by mutagenic agents. Acts as a DNA glycosylase that recognizes and removes damaged bases. Has a preference for oxidized purines, such as 7,8-dihydro-8-oxoguanine (8-oxoG). Has AP (apurinic/apyrimidinic) lyase activity and introduces nicks in the DNA strand. Cleaves the DNA backbone by beta-delta elimination to generate a single-strand break at the site of the removed base with both 3'- and 5'-phosphates. This chain is Formamidopyrimidine-DNA glycosylase, found in Leifsonia xyli subsp. xyli (strain CTCB07).